The following is a 280-amino-acid chain: Cell division control protein 2 homolog B (280 aa).

ATP is bound by residues 1–5 (AYGVV) and lysine 20. One can recognise a Protein kinase domain in the interval 1-274 (AYGVVYKARD…AKKALEHEYF (274 aa)). A Phosphotyrosine modification is found at tyrosine 2. The active-site Proton acceptor is the aspartate 114. Residue threonine 148 is modified to Phosphothreonine; by CAK.

The protein belongs to the protein kinase superfamily. CMGC Ser/Thr protein kinase family. CDC2/CDKX subfamily.

It catalyses the reaction L-seryl-[protein] + ATP = O-phospho-L-seryl-[protein] + ADP + H(+). The catalysed reaction is L-threonyl-[protein] + ATP = O-phospho-L-threonyl-[protein] + ADP + H(+). It carries out the reaction [DNA-directed RNA polymerase] + ATP = phospho-[DNA-directed RNA polymerase] + ADP + H(+). Its activity is regulated as follows. Phosphorylation at Tyr-2 inactivates the enzyme, while phosphorylation at Thr-148 activates it. In terms of biological role, plays a key role in the control of the eukaryotic cell cycle. In Antirrhinum majus (Garden snapdragon), this protein is Cell division control protein 2 homolog B (CDC2B).